A 415-amino-acid chain; its full sequence is Adenylosuccinate synthetase (415 aa).

GTP-binding positions include 11 to 17 (GDEGKGK) and 39 to 41 (GHT). The active-site Proton acceptor is D12. Mg(2+) contacts are provided by D12 and G39. Residues 12–15 (DEGK), 37–40 (NAGH), T124, R138, Q218, T233, and R297 each bind IMP. H40 serves as the catalytic Proton donor. Substrate is bound at residue 293–299 (TTTGRAR). Residues R299, 325-327 (KLD), and 403-405 (STS) contribute to the GTP site.

The protein belongs to the adenylosuccinate synthetase family. In terms of assembly, homodimer. Mg(2+) serves as cofactor.

It localises to the cytoplasm. It catalyses the reaction IMP + L-aspartate + GTP = N(6)-(1,2-dicarboxyethyl)-AMP + GDP + phosphate + 2 H(+). It functions in the pathway purine metabolism; AMP biosynthesis via de novo pathway; AMP from IMP: step 1/2. Plays an important role in the de novo pathway of purine nucleotide biosynthesis. Catalyzes the first committed step in the biosynthesis of AMP from IMP. The protein is Adenylosuccinate synthetase of Helicobacter hepaticus (strain ATCC 51449 / 3B1).